Here is a 399-residue protein sequence, read N- to C-terminus: Methylmalonic aciduria type A homolog, mitochondrial (399 aa).

The N-terminal 15 residues, 1 to 15 (MVVRSLLRVSRLTSA), are a transit peptide targeting the mitochondrion. Residues 131 to 139 (GSPGVGKSS), aspartate 274, and 310 to 312 (SIM) contribute to the GTP site.

This sequence belongs to the SIMIBI class G3E GTPase family. ArgK/MeaB subfamily.

Its subcellular location is the mitochondrion. May have GTPase activity. May also bind and hydrolyze ATP. May function as chaperone. Likely to have a role in propionyl-CoA and adenosylcobalamin metabolism. In Caenorhabditis elegans, this protein is Methylmalonic aciduria type A homolog, mitochondrial (mmaa-1).